Reading from the N-terminus, the 112-residue chain is UPF0060 membrane protein SCO3297 (112 aa).

The next 4 helical transmembrane spans lie at 8-28, 33-53, 62-82, and 88-108; these read ALFV…WQGV, GWLW…VATF, ILAA…VVAD, and RWDI…MWAP.

The protein belongs to the UPF0060 family.

The protein resides in the cell membrane. The protein is UPF0060 membrane protein SCO3297 of Streptomyces coelicolor (strain ATCC BAA-471 / A3(2) / M145).